The following is a 384-amino-acid chain: Queuine tRNA-ribosyltransferase (384 aa).

D92 (proton acceptor) is an active-site residue. Residues 92–96 (DSGGF), D146, Q190, and G217 each bind substrate. Positions 248 to 254 (GVGRPED) are RNA binding. D267 acts as the Nucleophile in catalysis. The segment at 272–276 (TRHAR) is RNA binding; important for wobble base 34 recognition. Zn(2+)-binding residues include C305, C307, C310, and H337.

Belongs to the queuine tRNA-ribosyltransferase family. In terms of assembly, homodimer. Within each dimer, one monomer is responsible for RNA recognition and catalysis, while the other monomer binds to the replacement base PreQ1. Zn(2+) serves as cofactor.

The enzyme catalyses 7-aminomethyl-7-carbaguanine + guanosine(34) in tRNA = 7-aminomethyl-7-carbaguanosine(34) in tRNA + guanine. It participates in tRNA modification; tRNA-queuosine biosynthesis. Its function is as follows. Catalyzes the base-exchange of a guanine (G) residue with the queuine precursor 7-aminomethyl-7-deazaguanine (PreQ1) at position 34 (anticodon wobble position) in tRNAs with GU(N) anticodons (tRNA-Asp, -Asn, -His and -Tyr). Catalysis occurs through a double-displacement mechanism. The nucleophile active site attacks the C1' of nucleotide 34 to detach the guanine base from the RNA, forming a covalent enzyme-RNA intermediate. The proton acceptor active site deprotonates the incoming PreQ1, allowing a nucleophilic attack on the C1' of the ribose to form the product. After dissociation, two additional enzymatic reactions on the tRNA convert PreQ1 to queuine (Q), resulting in the hypermodified nucleoside queuosine (7-(((4,5-cis-dihydroxy-2-cyclopenten-1-yl)amino)methyl)-7-deazaguanosine). The polypeptide is Queuine tRNA-ribosyltransferase (Xylella fastidiosa (strain M12)).